The chain runs to 351 residues: Formyl peptide receptor 2 (351 aa).

Topologically, residues 1–29 (MESNYSIHLNGSEVVVYDSTISRVLWILS) are extracellular. Asparagine 4 and asparagine 10 each carry an N-linked (GlcNAc...) asparagine glycan. The helical transmembrane segment at 30–50 (MVVVSITFFLGVLGNGLVIWV) threads the bilayer. At 51-61 (AGFRMPHTVTT) the chain is on the cytoplasmic side. The chain crosses the membrane as a helical span at residues 62-82 (IWYLNLALADFSFTATLPFLL). At 83 to 99 (VEMAMKEKWPFGWFLCK) the chain is on the extracellular side. Cysteines 98 and 176 form a disulfide. A helical transmembrane segment spans residues 100-120 (LVHIVVDVNLFGSVFLIALIA). Residues 121 to 144 (LDRCICVLHPVWAQNHRTVSLARK) are Cytoplasmic-facing. Residues 145–165 (VVVGPWIFALILTLPIFIFLT) traverse the membrane as a helical segment. Residues 166-205 (TVRIPGGDVYCTFNFGSWAQTDEEKLNTAITFVTTRGIIR) are Extracellular-facing. Residues 206–226 (FLIGFSMPMSIVAVCYGLIAV) form a helical membrane-spanning segment. At 227-241 (KINRRNLVNSSRPLR) the chain is on the cytoplasmic side. Residues 242–262 (VLTAVVASFFICWFPFQLVAL) form a helical membrane-spanning segment. Topologically, residues 263–282 (LGTVWFKETLLSGSYKILDM) are extracellular. A helical transmembrane segment spans residues 283-305 (FVNPTSSLAYFNSCLNPMLYVFM). The Cytoplasmic portion of the chain corresponds to 306 to 351 (GQDFRERFIHSLPYSLERALSEDSGQTSDSSTSSTSPPADIELKAP). The segment at 325–351 (LSEDSGQTSDSSTSSTSPPADIELKAP) is disordered. Over residues 327–341 (EDSGQTSDSSTSSTS) the composition is skewed to low complexity.

It belongs to the G-protein coupled receptor 1 family. Interacts with Amyloid-beta protein 42, product of APP; the interaction takes place at the cell surface and the complex is then rapidly internalized. In terms of tissue distribution, primarily expressed in neutrophils. Not detected in vomeronasal neurons.

It localises to the cell membrane. Its function is as follows. High affinity receptor for N-formyl-methionyl peptides (FMLP), which are powerful neutrophil chemotactic factors. Stimulates chemotaxis in immune cells to site of infection or tissue damage upon recognition of several ligands, such as FMLP, or ligand involved in cell damage, disease or inflammation. Receptor for the chemokine-like protein FAM19A5, mediating FAM19A5-stimulated macrophage chemotaxis and the inhibitory effect on TNFSF11/RANKL-induced osteoclast differentiation. In Mus musculus (Mouse), this protein is Formyl peptide receptor 2 (Fpr2).